The following is an 83-amino-acid chain: Apolipoprotein C-I, acidic form (83 aa).

Positions Met-1 to Gly-26 are cleaved as a signal peptide.

It belongs to the apolipoprotein C1 family.

The protein localises to the secreted. In terms of biological role, inhibitor of lipoprotein binding to the low density lipoprotein (LDL) receptor, LDL receptor-related protein, and very low density lipoprotein (VLDL) receptor. Associates with high density lipoproteins (HDL) and the triacylglycerol-rich lipoproteins in the plasma and makes up about 10% of the protein of the VLDL and 2% of that of HDL. Appears to interfere directly with fatty acid uptake and is also the major plasma inhibitor of cholesteryl ester transfer protein (CETP). Binds free fatty acids and reduces their intracellular esterification. Modulates the interaction of APOE with beta-migrating VLDL and inhibits binding of beta-VLDL to the LDL receptor-related protein. The protein is Apolipoprotein C-I, acidic form (APOC1A) of Pongo abelii (Sumatran orangutan).